A 203-amino-acid chain; its full sequence is MNKLTQGKFITFEGMDGIGKSTQSKMLYEYLKSQKIPVILTREVGGTFVAEKMREILVHEELLPMSELLQAMAARYDHMVRKIIPALKDGYIVICDRFIDSTACYQGLELENGIDLVYSLHTTLMPSLMPDITFFIDVEPDTAIKRVNSRNMSNKFDRRRIDFYKKIYSCFQELSHRFPERIKTIKASHLNPLEVHELIQKHL.

Residue 14-21 (GMDGIGKS) participates in ATP binding.

Belongs to the thymidylate kinase family.

The enzyme catalyses dTMP + ATP = dTDP + ADP. Phosphorylation of dTMP to form dTDP in both de novo and salvage pathways of dTTP synthesis. This Rickettsia typhi (strain ATCC VR-144 / Wilmington) protein is Thymidylate kinase.